The primary structure comprises 123 residues: Large ribosomal subunit protein bL17 (123 aa).

Belongs to the bacterial ribosomal protein bL17 family. As to quaternary structure, part of the 50S ribosomal subunit. Contacts protein L32.

This Borrelia garinii subsp. bavariensis (strain ATCC BAA-2496 / DSM 23469 / PBi) (Borreliella bavariensis) protein is Large ribosomal subunit protein bL17.